Here is a 190-residue protein sequence, read N- to C-terminus: dCTP deaminase, dUMP-forming (190 aa).

Residues 101–106 (KSSLGR), D119, 127–129 (TLE), Q148, Y162, and Q174 each bind dCTP. The active-site Proton donor/acceptor is E129. The segment at 163-190 (GSTRVGSKYQGQRGPTPSRSYQNFITST) is disordered. A compositionally biased stretch (polar residues) spans 171–190 (YQGQRGPTPSRSYQNFITST).

It belongs to the dCTP deaminase family. As to quaternary structure, homotrimer.

The enzyme catalyses dCTP + 2 H2O = dUMP + NH4(+) + diphosphate. Its pathway is pyrimidine metabolism; dUMP biosynthesis; dUMP from dCTP: step 1/1. In terms of biological role, bifunctional enzyme that catalyzes both the deamination of dCTP to dUTP and the hydrolysis of dUTP to dUMP without releasing the toxic dUTP intermediate. This chain is dCTP deaminase, dUMP-forming, found in Mycolicibacterium paratuberculosis (strain ATCC BAA-968 / K-10) (Mycobacterium paratuberculosis).